The sequence spans 918 residues: Non-lysosomal glucosylceramidase (918 aa).

The interval 886-918 (HKKSRRPSVTQGTGLSTQPECGPKRSLANLNSE) is disordered. Over residues 892 to 904 (PSVTQGTGLSTQP) the composition is skewed to polar residues. S893 bears the Phosphoserine mark.

The protein belongs to the non-lysosomal glucosylceramidase family. Widely expressed at low level. Highly expressed in testis and brain. Ubiquitously expressed in the brain (at protein level). Expressed by Sertoli cells (at protein level).

The protein resides in the endoplasmic reticulum membrane. The protein localises to the golgi apparatus membrane. It catalyses the reaction a beta-D-glucosyl-(1&lt;-&gt;1')-N-acylsphing-4-enine + H2O = an N-acylsphing-4-enine + D-glucose. The enzyme catalyses a beta-D-galactosyl-(1&lt;-&gt;1')-N-acylsphing-4-enine + H2O = an N-acylsphing-4-enine + D-galactose. The catalysed reaction is beta-D-glucosyl-(1-&gt;3)-O-lithocholate + H2O = lithocholate + D-glucose. It carries out the reaction beta-D-glucosyl-(1-&gt;3)-O-chenodeoxycholate + H2O = chenodeoxycholate + D-glucose. It catalyses the reaction a di-trans,poly-cis-dolichyl beta-D-glucosyl phosphate + chenodeoxycholate = beta-D-glucosyl-(1-&gt;3)-O-chenodeoxycholate + a di-trans,poly-cis-dolichyl phosphate + H(+). The enzyme catalyses octyl beta-D-glucose + chenodeoxycholate = beta-D-glucosyl-(1-&gt;3)-O-chenodeoxycholate + octan-1-ol. The catalysed reaction is cholesteryl 3-beta-D-glucoside + H2O = cholesterol + D-glucose. It carries out the reaction a beta-D-glucosyl-(1&lt;-&gt;1')-N-acylsphing-4-enine + cholesterol = cholesteryl 3-beta-D-glucoside + an N-acylsphing-4-enine. It catalyses the reaction beta-D-glucosyl-N-(9Z-octadecenoyl)-sphing-4E-enine + cholesterol = N-(9Z-octadecenoyl)-sphing-4-enine + cholesteryl 3-beta-D-glucoside. The enzyme catalyses a beta-D-galactosyl-(1&lt;-&gt;1')-N-acylsphing-4-enine + cholesterol = cholesteryl 3-beta-D-galactoside + an N-acylsphing-4-enine. The catalysed reaction is 1-(beta-D-galactosyl)-N-dodecanoylsphing-4-enine + cholesterol = cholesteryl 3-beta-D-galactoside + N-dodecanoylsphing-4-enine. The protein operates within lipid metabolism; sphingolipid metabolism. Its pathway is steroid metabolism; cholesterol metabolism. Its activity is regulated as follows. Enzymatic activity is dependent on membrane association and requires the presence of lipids. Inhibited by N-(adamantanemethyloxypentyl)-deoxynojirimycin/AMP-DNM. Inhibited by its product sphingosine/N-acylsphing-4-enine in a feedback loop. Also inhibited by other non-acetylated sphingoid bases and their derivatives but not by sphingosine-1-phosphate and complex sphingolipids. In terms of biological role, non-lysosomal glucosylceramidase that catalyzes the hydrolysis of glucosylceramides/GlcCers (such as beta-D-glucosyl-(1&lt;-&gt;1')-N-acylsphing-4-enine) to free glucose and ceramides (such as N-acylsphing-4-enine). GlcCers are membrane glycosphingolipids that have a wide intracellular distribution. They are the main precursors of more complex glycosphingolipids that play a role in cellular growth, differentiation, adhesion, signaling, cytoskeletal dynamics and membrane properties. Also involved in the transglucosylation of cholesterol, transferring glucose from GlcCer, thereby modifying its water solubility and biological properties. Under specific conditions, may catalyze the reverse reaction, transferring glucose from cholesteryl-3-beta-D-glucoside to ceramide (such as N-acylsphing-4-enine). May play a role in the metabolism of bile acids. Able to hydrolyze bile acid 3-O-glucosides as well as to produce bile acid-glucose conjugates thanks to a bile acid glucosyl transferase activity. Catalyzes the hydrolysis of galactosylceramides/GalCers (such as beta-D-galactosyl-(1&lt;-&gt;1')-N-acylsphing-4-enine), as well as galactosyl transfer between GalCers and cholesterol in vitro with lower activity compared with their activity against GlcCers. This is Non-lysosomal glucosylceramidase from Mus musculus (Mouse).